We begin with the raw amino-acid sequence, 226 residues long: MVNSRSPYRSPLSTLGGNNIQSVVPMVVEQSGMGERAFDIYSRLLRERIIFLGTPVDDQVADSIVAQLLFLDAEDPEKDIQLYINSPGGSVYAGLAIYDTMQQIRPDVVTICFGLAASMGAFLLSGGCKGKRMALPSSRIMIHQPLGGAQGQAVEIEIQAREILYIKDRLNTMLVEHTGQPMEKLQEDTERDFFMSAEEAKEYGLIDQVISRPNLPDPTTPVTSLG.

S118 (nucleophile) is an active-site residue. H143 is a catalytic residue.

Belongs to the peptidase S14 family. Fourteen ClpP subunits assemble into 2 heptameric rings which stack back to back to give a disk-like structure with a central cavity, resembling the structure of eukaryotic proteasomes.

Its subcellular location is the cytoplasm. It catalyses the reaction Hydrolysis of proteins to small peptides in the presence of ATP and magnesium. alpha-casein is the usual test substrate. In the absence of ATP, only oligopeptides shorter than five residues are hydrolyzed (such as succinyl-Leu-Tyr-|-NHMec, and Leu-Tyr-Leu-|-Tyr-Trp, in which cleavage of the -Tyr-|-Leu- and -Tyr-|-Trp bonds also occurs).. Cleaves peptides in various proteins in a process that requires ATP hydrolysis. Has a chymotrypsin-like activity. Plays a major role in the degradation of misfolded proteins. The sequence is that of ATP-dependent Clp protease proteolytic subunit 2 from Synechocystis sp. (strain ATCC 27184 / PCC 6803 / Kazusa).